We begin with the raw amino-acid sequence, 432 residues long: Glutamate-1-semialdehyde 2,1-aminomutase (432 aa).

Lys-269 is modified (N6-(pyridoxal phosphate)lysine).

This sequence belongs to the class-III pyridoxal-phosphate-dependent aminotransferase family. HemL subfamily. In terms of assembly, homodimer. Requires pyridoxal 5'-phosphate as cofactor.

Its subcellular location is the cytoplasm. The catalysed reaction is (S)-4-amino-5-oxopentanoate = 5-aminolevulinate. Its pathway is porphyrin-containing compound metabolism; protoporphyrin-IX biosynthesis; 5-aminolevulinate from L-glutamyl-tRNA(Glu): step 2/2. The chain is Glutamate-1-semialdehyde 2,1-aminomutase from Desulforudis audaxviator (strain MP104C).